The following is a 576-amino-acid chain: (E,E)-alpha-farnesene synthase (576 aa).

R289, D326, D330, R468, and N471 together coordinate (2E,6E)-farnesyl diphosphate. D326 and D330 together coordinate Mg(2+). Residues 326-330 (DDVYD) carry the DDXXD motif motif. Mg(2+) is bound by residues N471, T475, and E479. K(+) contacts are provided by D484 and S487.

It belongs to the terpene synthase family. Tpsb subfamily. Monomer. Mg(2+) serves as cofactor. Requires Mn(2+) as cofactor. K(+) is required as a cofactor.

It localises to the cytoplasm. It carries out the reaction (2E,6E)-farnesyl diphosphate = (3E,6E)-alpha-farnesene + diphosphate. Its function is as follows. Sesquiterpene synthase catalyzing the production of (E,E)-alpha-farnesene, the predominant terpene produced during storage of fruits. Produces all six isomers (E,E)-alpha-farnesene, (Z,E)-alpha-farnesene, (E,Z)-alpha-farnesene, (Z,Z)-alpha-farnesene, (E)-beta-farnesene and (Z)-beta-farnesene from a mix of isomeric forms of the farnesyl diphosphate precursor. Able to convert geranyl diphosphate to the monoterpenes (E)-beta-ocimene, linalool and beta-myrcene. Also has a prenyltransferase activity producing alpha-farnesene directly from geranyl diphosphate and isoprenyl diphosphate. The chain is (E,E)-alpha-farnesene synthase (AFS1) from Malus domestica (Apple).